A 43-amino-acid chain; its full sequence is Jararafibrase-3 (43 aa).

The 34-residue stretch at 10-43 (MNGLYYKIFDELKAWKDAEMFCRKYKPGWHLASF) folds into the C-type lectin domain.

The protein belongs to the true venom lectin family. As to quaternary structure, monomer. In terms of tissue distribution, expressed by the venom gland.

Its subcellular location is the secreted. Its activity is regulated as follows. Inhibited by 1,10-phenanthroline and EDTA. Functionally, may have both metalloproteinase and lectin activities. Induces local hemorrhage in the skin of rats. Degrades type-IV collagen, gelatin, laminin and fibronectin. Has hemagglutinating activity on red blood cells. This chain is Jararafibrase-3, found in Bothrops jararaca (Jararaca).